The sequence spans 493 residues: Transcription termination factor MTERF5, chloroplastic (493 aa).

A chloroplast-targeting transit peptide spans 1–43 (MQSLSQLGPSEIFLVARREKPSTRAQLWFTGRLSFRQETNGIR).

Belongs to the mTERF family. Interacts with pTAC6. Expressed in roots, rosette leaves, cauline leaves, stems, flower buds and open flowers.

The protein resides in the plastid. It is found in the chloroplast. Transcription termination factor required for processing and steady-state levels of plastid transcripts. Involved also in chloroplast transcriptional pausing, a general feature of chloroplast genes. Specifically and positively regulates the transcription of chloroplast psbEFLJ encoding for photosystem II (PSII) core subunits psbE, psbF, psbL and psbJ; causes the plastid-encoded RNA polymerase (PEP) complex to pause at psbEFLJ by binding to the +30 to +51 region of double-stranded DNA, and recruits additional pTAC6 to the transcriptionally paused region of psbEFLJ. May play a role in response to abiotic stresses. In Arabidopsis thaliana (Mouse-ear cress), this protein is Transcription termination factor MTERF5, chloroplastic.